A 149-amino-acid polypeptide reads, in one-letter code: MHSREAIEAYYRAVGTRMAGLPVYNPALAVELLGWRAVEGVGALGVLITPWCMNLFWQPPAEAELPTKGERAVLSLPSGDYECTLHEDESLGRYASASLCSPMQDFPDQAGARAMAEEVLRLVFAESEPPQPAQLTRRALFRRALGGAS.

It belongs to the HupJ family.

This Azotobacter chroococcum mcd 1 protein is Hydrogenase expression/formation protein HupT (hupT).